The following is a 173-amino-acid chain: Transcription factor S-II-related protein (173 aa).

Residues 9 to 129 (ISDKEREIVI…EETLNQMATV (121 aa)) form the TFIIS central domain. The TFIIS-type zinc finger occupies 130-170 (EWKPCYACKNTSYHFYQLQTRSADEPMTTFYICKNCMKTYK). C134, C137, C162, and C165 together coordinate Zn(2+).

This sequence belongs to the TFS-II family.

In Acanthamoeba polyphaga mimivirus (APMV), this protein is Transcription factor S-II-related protein.